The chain runs to 96 residues: Co-chaperonin GroES 1 (96 aa).

This sequence belongs to the GroES chaperonin family. Heptamer of 7 subunits arranged in a ring. Interacts with the chaperonin GroEL.

It localises to the cytoplasm. Together with the chaperonin GroEL, plays an essential role in assisting protein folding. The GroEL-GroES system forms a nano-cage that allows encapsulation of the non-native substrate proteins and provides a physical environment optimized to promote and accelerate protein folding. GroES binds to the apical surface of the GroEL ring, thereby capping the opening of the GroEL channel. The protein is Co-chaperonin GroES 1 of Vibrio vulnificus (strain CMCP6).